Consider the following 75-residue polypeptide: U6-lycotoxin-Ls1c (75 aa).

Residues 1 to 21 (MKLLLFTALVLVVISLIEVEA) form the signal peptide. Residues 22 to 25 (ENER) constitute a propeptide that is removed on maturation. 4 disulfide bridges follow: Cys-27–Cys-42, Cys-34–Cys-47, Cys-41–Cys-65, and Cys-49–Cys-63.

It belongs to the neurotoxin 19 (CSTX) family. 06 (U6-Lctx) subfamily. Expressed by the venom gland.

It localises to the secreted. The sequence is that of U6-lycotoxin-Ls1c from Lycosa singoriensis (Wolf spider).